The primary structure comprises 247 residues: 2,3-bisphosphoglycerate-dependent phosphoglycerate mutase (247 aa).

Residues 9–16 (RHGESEWN), 22–23 (TG), Arg-61, 88–91 (ERHY), Lys-99, 115–116 (RR), and 183–184 (GN) each bind substrate. His-10 acts as the Tele-phosphohistidine intermediate in catalysis. The active-site Proton donor/acceptor is the Glu-88.

The protein belongs to the phosphoglycerate mutase family. BPG-dependent PGAM subfamily.

The enzyme catalyses (2R)-2-phosphoglycerate = (2R)-3-phosphoglycerate. It participates in carbohydrate degradation; glycolysis; pyruvate from D-glyceraldehyde 3-phosphate: step 3/5. Catalyzes the interconversion of 2-phosphoglycerate and 3-phosphoglycerate. This is 2,3-bisphosphoglycerate-dependent phosphoglycerate mutase from Nocardioides sp. (strain ATCC BAA-499 / JS614).